The primary structure comprises 655 residues: Gastrulation defective protein 1 homolog (655 aa).

Disordered regions lie at residues 1 to 54 (MQRG…EQMI) and 83 to 165 (AKVF…DEQS). Composition is skewed to basic and acidic residues over residues 23–36 (RSNE…KEST), 91–115 (QIEK…KEDD), and 134–146 (TDKE…SSKD). The span at 147-164 (EDSDDDDYSSDEDSDDEQ) shows a compositional bias: acidic residues. 7 WD repeats span residues 180 to 219 (HGSR…SSMR), 227 to 268 (CENH…ECCK), 281 to 321 (GHVA…EQLQ), 330 to 369 (GLRT…VNTT), 377 to 416 (QKGS…QPLH), 422 to 467 (FSRY…EVQR), and 470 to 510 (VSNA…RGAK). 2 disordered regions span residues 544-580 (KSRT…VASS) and 633-655 (AIFS…EADK). Composition is skewed to basic and acidic residues over residues 554–564 (KARMDPVKSQR) and 639–655 (LPAD…EADK).

It belongs to the WD repeat GAD-1 family.

This is Gastrulation defective protein 1 homolog from Drosophila melanogaster (Fruit fly).